A 505-amino-acid polypeptide reads, in one-letter code: Activin receptor type-1B (505 aa).

A signal peptide spans 1 to 23 (MAESAGASSFFPLVVLLLAGSGG). Over 24 to 126 (SGPRGVQALL…EHPSMWGPVE (103 aa)) the chain is Extracellular. A glycan (N-linked (GlcNAc...) asparagine) is linked at Asn43. A helical transmembrane segment spans residues 127–149 (LVGIIAGPVFLLFLIIIIVFLVI). At 150-505 (NYHQRVYHNR…QLSVQEDVKI (356 aa)) the chain is on the cytoplasmic side. The 30-residue stretch at 177–206 (KTLQDLVYDLSTSGSGSGLPLFVQRTVART) folds into the GS domain. A Protein kinase domain is found at 207–497 (IVLQEIIGKG…LRIKKTLSQL (291 aa)). ATP is bound by residues 213 to 221 (IGKGRFGEV) and Lys234. Asp335 serves as the catalytic Proton acceptor. Tyr380 is modified (phosphotyrosine).

Belongs to the protein kinase superfamily. TKL Ser/Thr protein kinase family. TGFB receptor subfamily. As to quaternary structure, forms an activin receptor complex with activin receptor type-2 (ACVR2A or ACVR2B). Part of a complex consisting of MAGI2/ARIP1, ACVR2A, ACVR1B and SMAD3. Interacts with SMAD2 and SMAD3. Interacts with SMAD7. Interacts with FKBP1A. Interacts with IGSF1. Interacts with CRIPTO. Interacts with TDP2. Interacts with TSC22D1/TSC-22. Mg(2+) serves as cofactor. Requires Mn(2+) as cofactor. Post-translationally, autophosphorylated. Phosphorylated by activin receptor type-2 (ACVR2A or ACVR2B) in response to activin-binding at serine and threonine residues in the GS domain. Phosphorylation of ACVR1B by activin receptor type-2 regulates association with SMAD7. Ubiquitinated. Level of ubiquitination is regulated by the SMAD7-SMURF1 complex. In terms of processing, ubiquitinated. In terms of tissue distribution, expressed in many tissues, most strongly in kidney, pancreas, brain, lung, and liver.

The protein resides in the cell membrane. The enzyme catalyses L-threonyl-[receptor-protein] + ATP = O-phospho-L-threonyl-[receptor-protein] + ADP + H(+). It catalyses the reaction L-seryl-[receptor-protein] + ATP = O-phospho-L-seryl-[receptor-protein] + ADP + H(+). With respect to regulation, activin receptor type-2 (ACVR2A or ACVR2B) activates the type-1 receptor through phosphorylation of its regulatory GS domain. In terms of biological role, transmembrane serine/threonine kinase activin type-1 receptor forming an activin receptor complex with activin receptor type-2 (ACVR2A or ACVR2B). Transduces the activin signal from the cell surface to the cytoplasm and is thus regulating a many physiological and pathological processes including neuronal differentiation and neuronal survival, hair follicle development and cycling, FSH production by the pituitary gland, wound healing, extracellular matrix production, immunosuppression and carcinogenesis. Activin is also thought to have a paracrine or autocrine role in follicular development in the ovary. Within the receptor complex, type-2 receptors (ACVR2A and/or ACVR2B) act as a primary activin receptors whereas the type-1 receptors like ACVR1B act as downstream transducers of activin signals. Activin binds to type-2 receptor at the plasma membrane and activates its serine-threonine kinase. The activated receptor type-2 then phosphorylates and activates the type-1 receptor such as ACVR1B. Once activated, the type-1 receptor binds and phosphorylates the SMAD proteins SMAD2 and SMAD3, on serine residues of the C-terminal tail. Soon after their association with the activin receptor and subsequent phosphorylation, SMAD2 and SMAD3 are released into the cytoplasm where they interact with the common partner SMAD4. This SMAD complex translocates into the nucleus where it mediates activin-induced transcription. Inhibitory SMAD7, which is recruited to ACVR1B through FKBP1A, can prevent the association of SMAD2 and SMAD3 with the activin receptor complex, thereby blocking the activin signal. Activin signal transduction is also antagonized by the binding to the receptor of inhibin-B via the IGSF1 inhibin coreceptor. ACVR1B also phosphorylates TDP2. The sequence is that of Activin receptor type-1B (ACVR1B) from Homo sapiens (Human).